The primary structure comprises 99 residues: Small integral membrane protein 14 (99 aa).

Residues 1–49 (MAEGGFDPCECVCSHEHAMRRLINLLRQSQSYCTDTECLQELPGPSGDN) lie on the Lumenal side of the membrane. The helical transmembrane segment at 50-70 (GISVTMILVAWMVIALILFLL) threads the bilayer. Residues 71–99 (RPPNLRGSNLPGKPTSPHNGQDPPAPPVD) lie on the Cytoplasmic side of the membrane. The disordered stretch occupies residues 77-99 (GSNLPGKPTSPHNGQDPPAPPVD).

It is found in the endoplasmic reticulum membrane. This chain is Small integral membrane protein 14 (SMIM14), found in Pongo abelii (Sumatran orangutan).